Here is a 670-residue protein sequence, read N- to C-terminus: Zinc finger protein 233 (670 aa).

Positions 8 to 79 constitute a KRAB domain; the sequence is VTFKDVAVVF…ETEIQGDGCS (72 aa). The segment at 258–280 adopts a C2H2-type 1; degenerate zinc-finger fold; it reads QTSDENGKGLSVGSNLELHQQLH. The C2H2-type 2; degenerate zinc-finger motif lies at 311–336; sequence EKCYRNGDSGEGFSQGSHLQPHQRVS. The C2H2-type 3; degenerate zinc finger occupies 342–364; that stretch reads YRCQVYARSSNQNSCLPSHELTH. The C2H2-type 4; degenerate zinc-finger motif lies at 370-392; it reads CTCGRCGKGFHHSLDFDIHCVDS. The segment at 398-420 adopts a C2H2-type 5; degenerate zinc-finger fold; sequence CKCDVYDKGFSQTSQLQAHQRGH. 7 consecutive C2H2-type zinc fingers follow at residues 452–474, 480–502, 508–530, 536–558, 564–586, 592–614, and 620–642; these read YKCE…QRIH, YKCD…QRVH, YKCE…QQVH, and YKCG…QRVH.

The protein belongs to the krueppel C2H2-type zinc-finger protein family.

It localises to the nucleus. Functionally, may be involved in transcriptional regulation. The sequence is that of Zinc finger protein 233 (ZNF233) from Homo sapiens (Human).